The chain runs to 292 residues: MGRQKELMNRCGEMLHIRYRLLRQALAECLGTLILVMFGCGSVAQVVLSRGTHGGFLTINLAFGFAVTLGILVAGQVSGAHLNPAVTFAMCFLAREPWIKLPIYALAQTLGAFLGAGIVFGLYYDAIWAFANNELFVSGPNGTAGIFATYPSGHLDMVNGFFDQFIGTAALIVCVLAIVDPYNNPVPRGLEAFTVGLVVLVIGTSMGFNSGYAVNPARDFGPRLFTALAGWGSEVFTTGRHWWWVPIVSPLLGSIAGVFVYQLMIGCHLEQPPPSTEEENVKLAHMKHKEQI.

The Cytoplasmic segment spans residues 1–24 (MGRQKELMNRCGEMLHIRYRLLRQ). A helical transmembrane segment spans residues 25-42 (ALAECLGTLILVMFGCGS). Over 43–56 (VAQVVLSRGTHGGF) the chain is Extracellular. Residues 57–74 (LTINLAFGFAVTLGILVA) traverse the membrane as a helical segment. Residues 75 to 78 (GQVS) are Cytoplasmic-facing. The discontinuously helical intramembrane region spans 79 to 92 (GAHLNPAVTFAMCF). Positions 83–85 (NPA) match the NPA 1 motif. Over 93 to 100 (LAREPWIK) the chain is Cytoplasmic. A helical membrane pass occupies residues 101 to 121 (LPIYALAQTLGAFLGAGIVFG). Residues 122 to 159 (LYYDAIWAFANNELFVSGPNGTAGIFATYPSGHLDMVN) lie on the Extracellular side of the membrane. N141 carries N-linked (GlcNAc...) asparagine glycosylation. The chain crosses the membrane as a helical span at residues 160 to 177 (GFFDQFIGTAALIVCVLA). The Cytoplasmic portion of the chain corresponds to 178–189 (IVDPYNNPVPRG). Residues 190 to 206 (LEAFTVGLVVLVIGTSM) form a helical membrane-spanning segment. The Extracellular segment spans residues 207 to 210 (GFNS). Residues 211 to 224 (GYAVNPARDFGPRL) constitute an intramembrane region (discontinuously helical). The NPA 2 signature appears at 215–217 (NPA). Residues 225–242 (FTALAGWGSEVFTTGRHW) are Extracellular-facing. Residues 243-264 (WWVPIVSPLLGSIAGVFVYQLM) form a helical membrane-spanning segment. Topologically, residues 265–292 (IGCHLEQPPPSTEEENVKLAHMKHKEQI) are cytoplasmic.

It belongs to the MIP/aquaporin (TC 1.A.8) family. Homotetramer; each monomer provides an independent glycerol/water pore. Could also exist in other oligomeric states. As to expression, detected in principal cells in collecting ducts in kidney medulla (at protein level). Renal medulla and colon. Predominantly in the inner medulla. Expressed in basal layer of epidermal keratinocytes.

Its subcellular location is the cell membrane. The protein localises to the basolateral cell membrane. The catalysed reaction is glycerol(in) = glycerol(out). It catalyses the reaction H2O(in) = H2O(out). It carries out the reaction urea(in) = urea(out). The enzyme catalyses H2O2(out) = H2O2(in). Aquaglyceroporins form homotetrameric transmembrane channels, with each monomer independently mediating glycerol and water transport across the plasma membrane along their osmotic gradient. Could also be permeable to urea. Also participates in cell permeability to H2O2 and H2O2-mediated signaling. In skin, transports glycerol to the epidermis and stratum corneum, where it maintains hydration, elasticity, and supports lipid biosynthesis for barrier repair. In kidney, contributes to the reabsorption of water, helping the body maintain proper fluid balance. The sequence is that of Aquaporin-3 from Mus musculus (Mouse).